Reading from the N-terminus, the 211-residue chain is tRNA (guanine-N(7)-)-methyltransferase (211 aa).

The S-adenosyl-L-methionine site is built by Glu-44, Asp-69, Asp-96, and Asp-118. Asp-118 is a catalytic residue. Position 122 (Lys-122) interacts with substrate. The segment at 124–129 is interaction with RNA; the sequence is RHEKRR. Substrate contacts are provided by residues Asp-154 and 191-194; that span reads TEYE.

Belongs to the class I-like SAM-binding methyltransferase superfamily. TrmB family.

The catalysed reaction is guanosine(46) in tRNA + S-adenosyl-L-methionine = N(7)-methylguanosine(46) in tRNA + S-adenosyl-L-homocysteine. It functions in the pathway tRNA modification; N(7)-methylguanine-tRNA biosynthesis. Its function is as follows. Catalyzes the formation of N(7)-methylguanine at position 46 (m7G46) in tRNA. This is tRNA (guanine-N(7)-)-methyltransferase from Streptococcus mutans serotype c (strain ATCC 700610 / UA159).